The primary structure comprises 792 residues: Phenylalanine--tRNA ligase beta subunit (792 aa).

Positions 39–147 (GESLGQVVVA…DDAPVGQALA (109 aa)) constitute a tRNA-binding domain. The 76-residue stretch at 400–475 (PQPARILLRR…RIHGYDRVPT (76 aa)) folds into the B5 domain. Mg(2+) is bound by residues Asp453, Asp459, Glu462, and Asp463. Positions 698-791 (SRFPSVRRDL…IEREHRARIR (94 aa)) constitute an FDX-ACB domain.

This sequence belongs to the phenylalanyl-tRNA synthetase beta subunit family. Type 1 subfamily. Tetramer of two alpha and two beta subunits. It depends on Mg(2+) as a cofactor.

The protein resides in the cytoplasm. The enzyme catalyses tRNA(Phe) + L-phenylalanine + ATP = L-phenylalanyl-tRNA(Phe) + AMP + diphosphate + H(+). The protein is Phenylalanine--tRNA ligase beta subunit of Xanthomonas oryzae pv. oryzae (strain MAFF 311018).